The primary structure comprises 207 residues: Small ribosomal subunit protein uS4 (207 aa).

The tract at residues 31 to 55 (KCKLDSKPGQHGRTSGARTSDYGTQ) is disordered. Over residues 42-53 (GRTSGARTSDYG) the composition is skewed to polar residues. In terms of domain architecture, S4 RNA-binding spans 97 to 160 (SRLDNVVYRM…KKQARIVEAL (64 aa)).

This sequence belongs to the universal ribosomal protein uS4 family. As to quaternary structure, part of the 30S ribosomal subunit. Contacts protein S5. The interaction surface between S4 and S5 is involved in control of translational fidelity.

One of the primary rRNA binding proteins, it binds directly to 16S rRNA where it nucleates assembly of the body of the 30S subunit. Functionally, with S5 and S12 plays an important role in translational accuracy. This Burkholderia ambifaria (strain MC40-6) protein is Small ribosomal subunit protein uS4.